Here is a 246-residue protein sequence, read N- to C-terminus: Ribonuclease 3 (246 aa).

One can recognise an RNase III domain in the interval 10-135 (LENFLTLNNI…FVAAIYLDLG (126 aa)). Mg(2+) is bound at residue Glu50. Asp54 is an active-site residue. Positions 121 and 124 each coordinate Mg(2+). Glu124 is a catalytic residue. The DRBM domain maps to 161–230 (DPKSSFQEYI…ATRALETLKA (70 aa)).

The protein belongs to the ribonuclease III family. Homodimer. Requires Mg(2+) as cofactor.

It localises to the cytoplasm. It carries out the reaction Endonucleolytic cleavage to 5'-phosphomonoester.. Digests double-stranded RNA. Involved in the processing of primary rRNA transcript to yield the immediate precursors to the large and small rRNAs (23S and 16S). Processes some mRNAs, and tRNAs when they are encoded in the rRNA operon. Processes pre-crRNA and tracrRNA of type II CRISPR loci if present in the organism. The polypeptide is Ribonuclease 3 (Mycoplasma mobile (strain ATCC 43663 / 163K / NCTC 11711) (Mesomycoplasma mobile)).